The sequence spans 1299 residues: Probable membrane antigen 75 (1299 aa).

It localises to the virion tegument. The chain is Probable membrane antigen 75 (75) from Saimiriine herpesvirus 2 (strain 11) (SaHV-2).